The primary structure comprises 666 residues: MINFSLSLTKSMSYSFIWMLFVIHISCVLSADGNHILCSPSFTCGNQRGLLYPFWIAGRKECGHPDFELDCNAGVPELSISSVKFRILGADYDSGIITLARSDNIDDPCLPNSFTTSFNETVLPLASTTDLLTIYYDCNRNVSSFVSTFVKELDCPDDGTDDRRNYYLTRNLTFLPPSLKLEGNSFLLNDFGGSCSRNVSNPASRTALNTLESTPSTDNLKIALEDGFALEVNSDCRTCIDSKGACGFSQTSSRFVCYYRQEPQNPTRNKVILKLFFIVIYVLGIGAASFAMMGVILVVTCLNCLIRRQRKTLNDPRMRTSDDSRQQNLKALIPLKHYSYAQVTSITKSFAEVIGKGGFGTVYRGTLYDGRSVAVKVLKESQGNGEDFINEVASMSQTSHVNIVTLLGFCSEGYKRAIIYEFMENGSLDKFISSKKSSTMDWRELYGIALGVARGLEYLHHGCRTRIVHFDIKPQNVLLDDNLSPKVSDFGLAKLCERKESILSLMDTRGTIGYIAPEVFSRVYGRVSHKSDVYSYGMLVLDIIGARNKTSTEDTTSSTSSMYFPEWIYRDLEKAHNGKSIETAISNEEDEIAKKMTLVGLWCIQPWPLDRPAMNRVVEMMEGNLDALEVPPRPVLQQIPTATLQESSTFSEDISAYTEICSINVA.

Residues 1-30 form the signal peptide; sequence MINFSLSLTKSMSYSFIWMLFVIHISCVLS. Topologically, residues 31-275 are extracellular; it reads ADGNHILCSP…PTRNKVILKL (245 aa). N-linked (GlcNAc...) asparagine glycans are attached at residues Asn-119, Asn-141, Asn-171, and Asn-198. A helical membrane pass occupies residues 276-296; sequence FFIVIYVLGIGAASFAMMGVI. At 297 to 666 the chain is on the cytoplasmic side; sequence LVVTCLNCLI…YTEICSINVA (370 aa). The Protein kinase domain maps to 348 to 636; that stretch reads KSFAEVIGKG…ALEVPPRPVL (289 aa). Residues 354 to 362 and Lys-376 each bind ATP; that span reads IGKGGFGTV. Tyr-420 carries the phosphotyrosine modification. Asp-471 serves as the catalytic Proton acceptor. Residues Thr-508 and Thr-511 each carry the phosphothreonine modification.

It belongs to the protein kinase superfamily. Ser/Thr protein kinase family.

The protein localises to the membrane. The catalysed reaction is L-seryl-[protein] + ATP = O-phospho-L-seryl-[protein] + ADP + H(+). It catalyses the reaction L-threonyl-[protein] + ATP = O-phospho-L-threonyl-[protein] + ADP + H(+). This chain is LEAF RUST 10 DISEASE-RESISTANCE LOCUS RECEPTOR-LIKE PROTEIN KINASE-like 2.5, found in Arabidopsis thaliana (Mouse-ear cress).